The primary structure comprises 261 residues: 2-phytyl-1,4-beta-naphthoquinone methyltransferase, chloroplastic (261 aa).

The N-terminal 30 residues, 1–30 (MAALLGIVSPVTFTGKHPVNSRSRRRTVVK), are a transit peptide targeting the chloroplast.

It belongs to the class I-like SAM-binding methyltransferase superfamily. MenG/UbiE family.

It localises to the plastid. The protein localises to the chloroplast. The catalysed reaction is demethylphylloquinol + S-adenosyl-L-methionine = phylloquinol + S-adenosyl-L-homocysteine + H(+). Its function is as follows. Involved in the biosynthesis of phylloquinone (vitamin K1). Methyltransferase required for the conversion of 2-phytyl-1,4-beta-naphthoquinol to phylloquinol. In Arabidopsis thaliana (Mouse-ear cress), this protein is 2-phytyl-1,4-beta-naphthoquinone methyltransferase, chloroplastic.